We begin with the raw amino-acid sequence, 1118 residues long: Protein translocase subunit SecA (1118 aa).

ATP is bound by residues glutamine 176, 194-198 (GEGKT), and aspartate 693. Positions 1034–1056 (QQPVQQPKYRETKDEAGSAFGGG) are disordered.

Belongs to the SecA family. In terms of assembly, monomer and homodimer. Part of the essential Sec protein translocation apparatus which comprises SecA, SecYEG and auxiliary proteins SecDF. Other proteins may also be involved.

Its subcellular location is the cell inner membrane. It localises to the cytoplasm. It catalyses the reaction ATP + H2O + cellular proteinSide 1 = ADP + phosphate + cellular proteinSide 2.. In terms of biological role, part of the Sec protein translocase complex. Interacts with the SecYEG preprotein conducting channel. Has a central role in coupling the hydrolysis of ATP to the transfer of proteins into and across the cell membrane, serving as an ATP-driven molecular motor driving the stepwise translocation of polypeptide chains across the membrane. The polypeptide is Protein translocase subunit SecA (Cytophaga hutchinsonii (strain ATCC 33406 / DSM 1761 / CIP 103989 / NBRC 15051 / NCIMB 9469 / D465)).